Reading from the N-terminus, the 30-residue chain is Alanine carboxypeptidase (30 aa).

The enzyme catalyses Release of a C-terminal alanine from a peptide or a variety of pteroyl or acyl groups.. The protein is Alanine carboxypeptidase of Geobacillus stearothermophilus (Bacillus stearothermophilus).